Here is a 420-residue protein sequence, read N- to C-terminus: Tubulin epsilon and delta complex protein 1 (420 aa).

Positions 276 to 340 (SEGGLGELES…AVQQELAALQ (65 aa)) form a coiled coil. The segment covering 342–351 (SWEQSSTPGQ) has biased composition (polar residues). Residues 342–369 (SWEQSSTPGQPQRPHRLVRSKDGAPRPQ) form a disordered region. Positions 377-409 (IRTLSAKEACLKKALHQLQRQCQQELARLAGAL) form a coiled coil.

Interacts with TEDC2. Found in a complex with TEDC1, TEDC2, TUBE1 and TUBD1.

The protein resides in the cell projection. It is found in the cilium. Its subcellular location is the cytoplasm. It localises to the cytoskeleton. The protein localises to the microtubule organizing center. The protein resides in the centrosome. It is found in the centriole. Its function is as follows. Acts as a positive regulator of ciliary hedgehog signaling. Required for centriole stability. May play a role in counteracting perturbation of actin filaments, such as after treatment with the actin depolymerizing microbial metabolite Chivosazole F. This Mus musculus (Mouse) protein is Tubulin epsilon and delta complex protein 1.